The primary structure comprises 296 residues: 4-diphosphocytidyl-2-C-methyl-D-erythritol kinase (296 aa).

Residue K18 is part of the active site. Residue 103–113 (PHGAGLGGGSS) coordinates ATP. The active site involves D146.

It belongs to the GHMP kinase family. IspE subfamily.

The catalysed reaction is 4-CDP-2-C-methyl-D-erythritol + ATP = 4-CDP-2-C-methyl-D-erythritol 2-phosphate + ADP + H(+). It participates in isoprenoid biosynthesis; isopentenyl diphosphate biosynthesis via DXP pathway; isopentenyl diphosphate from 1-deoxy-D-xylulose 5-phosphate: step 3/6. Catalyzes the phosphorylation of the position 2 hydroxy group of 4-diphosphocytidyl-2C-methyl-D-erythritol. The sequence is that of 4-diphosphocytidyl-2-C-methyl-D-erythritol kinase from Solidesulfovibrio magneticus (strain ATCC 700980 / DSM 13731 / RS-1) (Desulfovibrio magneticus).